A 430-amino-acid polypeptide reads, in one-letter code: Ribosomal protein uS12 methylthiotransferase RimO (430 aa).

Residues 4 to 119 form the MTTase N-terminal domain; that stretch reads LKINFISLGC…IPVLFDIKPK (116 aa). [4Fe-4S] cluster contacts are provided by C13, C49, C82, C141, C145, and C148. The region spanning 127-358 is the Radical SAM core domain; sequence STPKHTAYLK…SALQENITEQ (232 aa). One can recognise a TRAM domain in the interval 361–430; it reads KSLIGKELDI…DKYDVVGEAE (70 aa).

Belongs to the methylthiotransferase family. RimO subfamily. [4Fe-4S] cluster is required as a cofactor.

Its subcellular location is the cytoplasm. The enzyme catalyses L-aspartate(89)-[ribosomal protein uS12]-hydrogen + (sulfur carrier)-SH + AH2 + 2 S-adenosyl-L-methionine = 3-methylsulfanyl-L-aspartate(89)-[ribosomal protein uS12]-hydrogen + (sulfur carrier)-H + 5'-deoxyadenosine + L-methionine + A + S-adenosyl-L-homocysteine + 2 H(+). Its function is as follows. Catalyzes the methylthiolation of an aspartic acid residue of ribosomal protein uS12. The polypeptide is Ribosomal protein uS12 methylthiotransferase RimO (Sulfurihydrogenibium sp. (strain YO3AOP1)).